A 305-amino-acid chain; its full sequence is GMP synthase [glutamine-hydrolyzing] subunit B (305 aa).

In terms of domain architecture, GMPS ATP-PPase spans 2-185 (VETEEFIAEA…LGLEEVISER (184 aa)). 29 to 35 (SGGVDSS) contributes to the ATP binding site.

As to quaternary structure, heterodimer composed of a glutamine amidotransferase subunit (A) and a GMP-binding subunit (B).

The enzyme catalyses XMP + L-glutamine + ATP + H2O = GMP + L-glutamate + AMP + diphosphate + 2 H(+). The protein operates within purine metabolism; GMP biosynthesis; GMP from XMP (L-Gln route): step 1/1. Functionally, catalyzes the synthesis of GMP from XMP. This is GMP synthase [glutamine-hydrolyzing] subunit B from Halorubrum lacusprofundi (strain ATCC 49239 / DSM 5036 / JCM 8891 / ACAM 34).